The sequence spans 595 residues: MTMTLHTKASGMALLHQIQGNELEPLSRPQLKMPLERALSEVYVDSSKPAMFNYPEGAAYEFNAATAPAPVYGQTGIAYGSGSEATAFGSNSLGLFPQLNSVSPSPLMLLHPPPPQLSPFLHPHGQQVPYYLENEPSAYAVRDSGPPAFYRSNSDNRRQSGRERLSSSSEKGSMAMESVKETRYCAVCNDYASGYHYGVWSCEGCKAFFKRSIQGHNDYMCPATNQCTIDKNRRKSCQACRLRKCYEVGMMKGGIRKDRRGGRMLKHKRQRDDLEGRNDMGPSGDMRATNLWPSPLVIKHTKKNSPALSLTADQMVSALLDAEPPLIYSEYDPSRPFSEASMMGLLTNLADRELVHMINWAKRVPGFGDLNLHDQVHLLECAWLEILMIGLIWRSMEHPGKLLFAPNLLLDRNQGKCVEGMVEIFDMLLATSARFRMMDLQGEEFVCLKSIILLNSGVYTFLSSTLKSLEEKDHIHRVLDKITDTLIHLMAKAGLTLQQQHRRLAQLLLILSHIRHMSNKGMEHLYNMKCKNVVPFYDLLLEMLDAHRLHTPVSRMGVSPEEPSQSQLTTTNSTSSHSLQTYYIPSEAESFPNTI.

The segment at 1-184 (MTMTLHTKAS…AMESVKETRY (184 aa)) is modulating(transactivation AF-1); mediates interaction with MACROD1. Ser-10 is a glycosylation site (O-linked (GlcNAc) serine). The required for interaction with NCOA1 stretch occupies residues 35–47 (LERALSEVYVDSS). The segment at 35–174 (LERALSEVYV…LSSSSEKGSM (140 aa)) is interaction with DDX5; self-association. Phosphoserine; by CDK2 occurs at positions 103 and 105. Ser-118 carries the phosphoserine modification. The segment at 143-174 (DSGPPAFYRSNSDNRRQSGRERLSSSSEKGSM) is disordered. The segment covering 154–165 (SDNRRQSGRERL) has biased composition (basic and acidic residues). Ser-167 carries the phosphoserine; by CK2 modification. NR C4-type zinc fingers lie at residues 185 to 205 (CAVC…CEGC) and 221 to 245 (CPAT…LRKC). Positions 185-250 (CAVCNDYASG…RLRKCYEVGM (66 aa)) form a DNA-binding region, nuclear receptor. The segment at 185 to 310 (CAVCNDYASG…TKKNSPALSL (126 aa)) is mediates interaction with DNTTIP2. The interval 251 to 310 (MKGGIRKDRRGGRMLKHKRQRDDLEGRNDMGPSGDMRATNLWPSPLVIKHTKKNSPALSL) is hinge. At Arg-260 the chain carries Asymmetric dimethylarginine; by PRMT1. A compositionally biased stretch (basic residues) spans 260–269 (RGGRMLKHKR). Residues 260-285 (RGGRMLKHKRQRDDLEGRNDMGPSGD) are disordered. The tract at residues 262–595 (GRMLKHKRQR…SEAESFPNTI (334 aa)) is interaction with AKAP13. Positions 264 to 595 (MLKHKRQRDD…SEAESFPNTI (332 aa)) are self-association. In terms of domain architecture, NR LBD spans 311–547 (TADQMVSALL…DLLLEMLDAH (237 aa)). Positions 311 to 595 (TADQMVSALL…SEAESFPNTI (285 aa)) are transactivation AF-2. Positions 353 and 394 each coordinate 17beta-estradiol. A lipid anchor (S-palmitoyl cysteine) is attached at Cys-447. His-524 lines the 17beta-estradiol pocket. Tyr-537 carries the phosphotyrosine; by Tyr-kinases modification. A disordered region spans residues 554–578 (SRMGVSPEEPSQSQLTTTNSTSSHS). Over residues 564 to 578 (SQSQLTTTNSTSSHS) the composition is skewed to low complexity. A glycan (O-linked (GlcNAc) threonine) is linked at Thr-571.

This sequence belongs to the nuclear hormone receptor family. NR3 subfamily. In terms of assembly, binds DNA as a homodimer. Can form a heterodimer with ESR2. Interacts with coactivator NCOA5. Interacts with PELP1, the interaction is enhanced by 17-beta-estradiol; the interaction increases ESR1 transcriptional activity. Interacts with NCOA7; the interaction is ligand-inducible. Interacts with AKAP13, CUEDC2, HEXIM1, KDM5A, MAP1S, SMARD1, and UBE1C. Interacts with MUC1; the interaction is stimulated by 7 beta-estradiol (E2) and enhances ESR1-mediated transcription. Interacts with DNTTIP2, and UIMC1. Interacts with KMT2D/MLL2. Interacts with ATAD2; the interaction is enhanced by estradiol. Interacts with KIF18A and LDB1. Interacts with RLIM (via its C-terminus). Interacts with MACROD1. Interacts with SH2D4A and PLCG. Interacts with SH2D4A; the interaction blocks binding to PLCG and inhibits estrogen-induced cell proliferation. Interacts with DYNLL1. Interacts with CCDC62; the interaction requires estradiol and appears to enhance the transcription of target genes. Interacts with NR2C1; the interaction prevents homodimerization of ESR1 and suppresses its transcriptional activity and cell growth. Interacts with DNAAF4. Interacts with PRMT2. Interacts with RBFOX2. Interacts with EP300; the interaction is estrogen-dependent and enhanced by CITED1. Interacts with CITED1; the interaction is estrogen-dependent. Interacts with FAM120B, FOXL2, PHB2 and SLC30A9. Interacts with coactivators NCOA3 and NCOA6. Interacts with STK3/MST2 only in the presence of SAV1 and vice-versa. Binds to CSNK1D. Interacts with NCOA2; NCOA2 can interact with ESR1 AF-1 and AF-2 domains simultaneously and mediate their transcriptional synergy. Interacts with DDX5. Interacts with NCOA1; the interaction seems to require a self-association of N-terminal and C-terminal regions. Interacts with ZNF366, DDX17, NFKB1, RELA, SP1 and SP3. Interacts with NRIP1. Interacts with GPER1; the interaction occurs in an estrogen-dependent manner. Interacts with CLOCK and the interaction is stimulated by estrogen. Interacts with TRIP4 (ufmylated); estrogen dependent. Interacts with LMTK3; the interaction phosphorylates ESR1 (in vitro) and protects it against proteasomal degradation. Interacts with CCAR2 (via N-terminus) in a ligand-independent manner. Interacts with ZFHX3. Interacts with SFR1 in a ligand-dependent and -independent manner. Interacts with DCAF13, LATS1 and DCAF1; regulates ESR1 ubiquitination and ubiquitin-mediated proteasomal degradation. Interacts (via DNA-binding domain) with POU4F2 (C-terminus); this interaction increases the estrogen receptor ESR1 transcriptional activity in a DNA- and ligand 17-beta-estradiol-independent manner. Interacts with ESRRB isoform 1. Interacts with UBE3A and WBP2. Interacts with GTF2B. Interacts with RBM39. In the absence of hormonal ligand, interacts with TACC1. Interacts with PI3KR1 or PI3KR2 and PTK2/FAK1. Interacts with SRC. Interacts with BAG1; the interaction is promoted in the absence of estradiol (17-beta-estradiol/E2). Interacts with and ubiquitinated by STUB1; the interaction is promoted in the absence of estradiol (17-beta-estradiol/E2). Interacts with NEDD8. Post-translationally, ubiquitinated; regulated by LATS1 via DCAF1 it leads to ESR1 proteasomal degradation. Deubiquitinated by OTUB1. Ubiquitinated by STUB1/CHIP; in the CA1 hippocampal region following loss of endogenous circulating estradiol (17-beta-estradiol/E2). Ubiquitinated by UBR5, leading to its degradation: UBR5 specifically recognizes and binds ligand-bound ESR1 when it is not associated with coactivators (NCOAs). In presence of NCOAs, the UBR5-degron is not accessible, preventing its ubiquitination and degradation. In terms of processing, phosphorylated by cyclin A/CDK2 and CK1. Phosphorylation probably enhances transcriptional activity. Dephosphorylation at Ser-118 by PPP5C inhibits its transactivation activity. Phosphorylated by LMTK3 (in vitro). Palmitoylated at Cys-447 by ZDHHC7 and ZDHHC21. Palmitoylation is required for plasma membrane targeting and for rapid intracellular signaling via ERK and AKT kinases and cAMP generation, but not for signaling mediated by the nuclear hormone receptor. Post-translationally, dimethylated by PRMT1 at Arg-260. The methylation may favor cytoplasmic localization. Demethylated by JMJD6 at Arg-260.

The protein resides in the nucleus. Its subcellular location is the cytoplasm. It is found in the golgi apparatus. The protein localises to the cell membrane. Functionally, nuclear hormone receptor. The steroid hormones and their receptors are involved in the regulation of eukaryotic gene expression and affect cellular proliferation and differentiation in target tissues. Ligand-dependent nuclear transactivation involves either direct homodimer binding to a palindromic estrogen response element (ERE) sequence or association with other DNA-binding transcription factors, such as AP-1/c-Jun, c-Fos, ATF-2, Sp1 and Sp3, to mediate ERE-independent signaling. Ligand binding induces a conformational change allowing subsequent or combinatorial association with multiprotein coactivator complexes through LXXLL motifs of their respective components. Mutual transrepression occurs between the estrogen receptor (ER) and NF-kappa-B in a cell-type specific manner. Decreases NF-kappa-B DNA-binding activity and inhibits NF-kappa-B-mediated transcription from the IL6 promoter and displace RELA/p65 and associated coregulators from the promoter. Recruited to the NF-kappa-B response element of the CCL2 and IL8 promoters and can displace CREBBP. Present with NF-kappa-B components RELA/p65 and NFKB1/p50 on ERE sequences. Can also act synergistically with NF-kappa-B to activate transcription involving respective recruitment adjacent response elements; the function involves CREBBP. Can activate the transcriptional activity of TFF1. Also mediates membrane-initiated estrogen signaling involving various kinase cascades. Essential for MTA1-mediated transcriptional regulation of BRCA1 and BCAS3. Maintains neuronal survival in response to ischemic reperfusion injury when in the presence of circulating estradiol (17-beta-estradiol/E2). The chain is Estrogen receptor (ESR1) from Mesocricetus auratus (Golden hamster).